Consider the following 286-residue polypeptide: Aldo-keto reductase MAP_4149 (286 aa).

Y61 (proton donor) is an active-site residue. 7 residues coordinate NADPH: L201, V203, V239, R241, S242, R247, and N251.

This sequence belongs to the aldo/keto reductase family.

This chain is Aldo-keto reductase MAP_4149, found in Mycolicibacterium paratuberculosis (strain ATCC BAA-968 / K-10) (Mycobacterium paratuberculosis).